The following is a 210-amino-acid chain: NADH dehydrogenase [ubiquinone] iron-sulfur protein 8, mitochondrial (210 aa).

The transit peptide at methionine 1–alanine 34 directs the protein to the mitochondrion. 4Fe-4S ferredoxin-type domains lie at arginine 102–glutamate 131 and threonine 141–asparagine 170. [4Fe-4S] cluster contacts are provided by cysteine 111, cysteine 114, cysteine 117, cysteine 121, cysteine 150, cysteine 153, cysteine 156, and cysteine 160.

This sequence belongs to the complex I 23 kDa subunit family. Core subunit of respiratory chain NADH dehydrogenase (Complex I) which is composed of 45 different subunits. This is a component of the iron-sulfur (IP) fragment of the enzyme. Interacts with RAB5IF. [4Fe-4S] cluster is required as a cofactor.

Its subcellular location is the mitochondrion inner membrane. It catalyses the reaction a ubiquinone + NADH + 5 H(+)(in) = a ubiquinol + NAD(+) + 4 H(+)(out). In terms of biological role, core subunit of the mitochondrial membrane respiratory chain NADH dehydrogenase (Complex I) which catalyzes electron transfer from NADH through the respiratory chain, using ubiquinone as an electron acceptor. Essential for the catalytic activity and assembly of complex I. This is NADH dehydrogenase [ubiquinone] iron-sulfur protein 8, mitochondrial (NDUFS8) from Pongo abelii (Sumatran orangutan).